A 150-amino-acid polypeptide reads, in one-letter code: Large ribosomal subunit protein uL15 (150 aa).

Positions 1 to 15 (MNLSNLQPAEGSTHN) are enriched in polar residues. A disordered region spans residues 1 to 52 (MNLSNLQPAEGSTHNQNKRLGRGEGSGKGGTSARGHKGAKSRSGYSKKIGFE). The span at 23–32 (GEGSGKGGTS) shows a compositional bias: gly residues.

The protein belongs to the universal ribosomal protein uL15 family. As to quaternary structure, part of the 50S ribosomal subunit.

In terms of biological role, binds to the 23S rRNA. This is Large ribosomal subunit protein uL15 from Flavobacterium psychrophilum (strain ATCC 49511 / DSM 21280 / CIP 103535 / JIP02/86).